The following is a 164-amino-acid chain: Phosphopantetheine adenylyltransferase (164 aa).

Ser-9 serves as a coordination point for substrate. Residues 9 to 10 and His-17 contribute to the ATP site; that span reads SF. Substrate-binding residues include Lys-41, Thr-74, and Arg-88. Residues 89 to 91, Glu-99, and 124 to 130 contribute to the ATP site; these read GVR and NSFVASS.

This sequence belongs to the bacterial CoaD family. As to quaternary structure, homohexamer. It depends on Mg(2+) as a cofactor.

It is found in the cytoplasm. It catalyses the reaction (R)-4'-phosphopantetheine + ATP + H(+) = 3'-dephospho-CoA + diphosphate. The protein operates within cofactor biosynthesis; coenzyme A biosynthesis; CoA from (R)-pantothenate: step 4/5. Functionally, reversibly transfers an adenylyl group from ATP to 4'-phosphopantetheine, yielding dephospho-CoA (dPCoA) and pyrophosphate. The protein is Phosphopantetheine adenylyltransferase of Lactobacillus helveticus (strain DPC 4571).